The primary structure comprises 149 residues: SsrA-binding protein (149 aa).

The interval 123-149 is disordered; that stretch reads KQFDKRETEKQRDWQREKARIMKGGKE.

The protein belongs to the SmpB family.

The protein resides in the cytoplasm. Required for rescue of stalled ribosomes mediated by trans-translation. Binds to transfer-messenger RNA (tmRNA), required for stable association of tmRNA with ribosomes. tmRNA and SmpB together mimic tRNA shape, replacing the anticodon stem-loop with SmpB. tmRNA is encoded by the ssrA gene; the 2 termini fold to resemble tRNA(Ala) and it encodes a 'tag peptide', a short internal open reading frame. During trans-translation Ala-aminoacylated tmRNA acts like a tRNA, entering the A-site of stalled ribosomes, displacing the stalled mRNA. The ribosome then switches to translate the ORF on the tmRNA; the nascent peptide is terminated with the 'tag peptide' encoded by the tmRNA and targeted for degradation. The ribosome is freed to recommence translation, which seems to be the essential function of trans-translation. This is SsrA-binding protein from Cupriavidus taiwanensis (strain DSM 17343 / BCRC 17206 / CCUG 44338 / CIP 107171 / LMG 19424 / R1) (Ralstonia taiwanensis (strain LMG 19424)).